Reading from the N-terminus, the 113-residue chain is Putative pterin-4-alpha-carbinolamine dehydratase (113 aa).

It belongs to the pterin-4-alpha-carbinolamine dehydratase family.

The enzyme catalyses (4aS,6R)-4a-hydroxy-L-erythro-5,6,7,8-tetrahydrobiopterin = (6R)-L-erythro-6,7-dihydrobiopterin + H2O. The sequence is that of Putative pterin-4-alpha-carbinolamine dehydratase from Nitrosomonas europaea (strain ATCC 19718 / CIP 103999 / KCTC 2705 / NBRC 14298).